Reading from the N-terminus, the 291-residue chain is ATP synthase gamma chain (291 aa).

The protein belongs to the ATPase gamma chain family. As to quaternary structure, F-type ATPases have 2 components, CF(1) - the catalytic core - and CF(0) - the membrane proton channel. CF(1) has five subunits: alpha(3), beta(3), gamma(1), delta(1), epsilon(1). CF(0) has three main subunits: a, b and c.

It is found in the cell inner membrane. Produces ATP from ADP in the presence of a proton gradient across the membrane. The gamma chain is believed to be important in regulating ATPase activity and the flow of protons through the CF(0) complex. This Syntrophus aciditrophicus (strain SB) protein is ATP synthase gamma chain.